Here is a 344-residue protein sequence, read N- to C-terminus: Glycerol-3-phosphate dehydrogenase [NAD(P)+] (344 aa).

Residues serine 11, tryptophan 12, histidine 32, arginine 33, and lysine 106 each contribute to the NADPH site. Positions 106, 136, and 138 each coordinate sn-glycerol 3-phosphate. NADPH is bound at residue alanine 140. Lysine 192, aspartate 245, serine 255, arginine 256, and asparagine 257 together coordinate sn-glycerol 3-phosphate. The active-site Proton acceptor is the lysine 192. Arginine 256 contacts NADPH. NADPH contacts are provided by valine 280 and glutamate 282.

It belongs to the NAD-dependent glycerol-3-phosphate dehydrogenase family.

Its subcellular location is the cytoplasm. The enzyme catalyses sn-glycerol 3-phosphate + NAD(+) = dihydroxyacetone phosphate + NADH + H(+). It carries out the reaction sn-glycerol 3-phosphate + NADP(+) = dihydroxyacetone phosphate + NADPH + H(+). It functions in the pathway membrane lipid metabolism; glycerophospholipid metabolism. Catalyzes the reduction of the glycolytic intermediate dihydroxyacetone phosphate (DHAP) to sn-glycerol 3-phosphate (G3P), the key precursor for phospholipid synthesis. The protein is Glycerol-3-phosphate dehydrogenase [NAD(P)+] of Geobacillus kaustophilus (strain HTA426).